A 205-amino-acid chain; its full sequence is MKRNKTSKAWMHEHLNDTYVQRANAEGYRARAAYKLMEIDERDRLLRPGRVVVDLGAAPGSWCQVARQRVGSDGRVLALDILPMDPVPGVDFLQGDFTEDAVLAELESRLAGAAVDLVLSDMAPNLSGVATVDQARSIYLCELALDFARRHLKPGGQFLVKVFQGEGFMGFRKAMDEVFLSVQVRKPKASRDRSAEVYLLGVDLR.

S-adenosyl-L-methionine-binding residues include Gly60, Trp62, Asp80, Asp96, and Asp121. The active-site Proton acceptor is Lys161.

It belongs to the class I-like SAM-binding methyltransferase superfamily. RNA methyltransferase RlmE family.

It is found in the cytoplasm. It catalyses the reaction uridine(2552) in 23S rRNA + S-adenosyl-L-methionine = 2'-O-methyluridine(2552) in 23S rRNA + S-adenosyl-L-homocysteine + H(+). Functionally, specifically methylates the uridine in position 2552 of 23S rRNA at the 2'-O position of the ribose in the fully assembled 50S ribosomal subunit. This chain is Ribosomal RNA large subunit methyltransferase E, found in Azoarcus sp. (strain BH72).